The primary structure comprises 247 residues: Small ribosomal subunit protein uS2 (247 aa).

This sequence belongs to the universal ribosomal protein uS2 family.

The polypeptide is Small ribosomal subunit protein uS2 (Fusobacterium nucleatum subsp. nucleatum (strain ATCC 25586 / DSM 15643 / BCRC 10681 / CIP 101130 / JCM 8532 / KCTC 2640 / LMG 13131 / VPI 4355)).